A 238-amino-acid chain; its full sequence is Pyridoxine 5'-phosphate synthase (238 aa).

N7 and R18 together coordinate 3-amino-2-oxopropyl phosphate. H43 (proton acceptor) is an active-site residue. Residues R45 and H50 each coordinate 1-deoxy-D-xylulose 5-phosphate. The Proton acceptor role is filled by E70. 1-deoxy-D-xylulose 5-phosphate is bound at residue T100. The Proton donor role is filled by H190. Residues D191 and 213–214 (GH) each bind 3-amino-2-oxopropyl phosphate.

Belongs to the PNP synthase family. In terms of assembly, homooctamer; tetramer of dimers.

The protein localises to the cytoplasm. The enzyme catalyses 3-amino-2-oxopropyl phosphate + 1-deoxy-D-xylulose 5-phosphate = pyridoxine 5'-phosphate + phosphate + 2 H2O + H(+). The protein operates within cofactor biosynthesis; pyridoxine 5'-phosphate biosynthesis; pyridoxine 5'-phosphate from D-erythrose 4-phosphate: step 5/5. Its function is as follows. Catalyzes the complicated ring closure reaction between the two acyclic compounds 1-deoxy-D-xylulose-5-phosphate (DXP) and 3-amino-2-oxopropyl phosphate (1-amino-acetone-3-phosphate or AAP) to form pyridoxine 5'-phosphate (PNP) and inorganic phosphate. The polypeptide is Pyridoxine 5'-phosphate synthase (Phocaeicola vulgatus (strain ATCC 8482 / DSM 1447 / JCM 5826 / CCUG 4940 / NBRC 14291 / NCTC 11154) (Bacteroides vulgatus)).